Reading from the N-terminus, the 314-residue chain is Transcription factor SOX-12 (314 aa).

Disordered stretches follow at residues 1–40 and 101–287; these read MVQQRGARAKRDGGPPPPGPGPAAEGAREPGWCKTPSGHI and MADY…FEFP. The segment at residues 40-108 is a DNA-binding region (HMG box); the sequence is IKRPMNAFMV…KHMADYPDYK (69 aa). Residues 149–159 are compositionally biased toward gly residues; the sequence is RASGGPLGGGA. The span at 162-173 shows a compositional bias: acidic residues; sequence PEDDDEDEEEEL. The segment covering 174-187 has biased composition (basic and acidic residues); it reads LEVRLLETPGRELW. Positions 191-217 are enriched in low complexity; sequence PAGRAARGPAERAQGPSGEGAAASAAS. The segment covering 221–243 has biased composition (acidic residues); that stretch reads SEDEEPEEEEEEAATAEEGEEET. The required for transcriptional activation activity and synergistic coactivation of transcriptional activity with POU3F2 stretch occupies residues 282 to 314; the sequence is SHFEFPDYCTPEVTEMIAGDWRSSSIADLVFTY.

In terms of tissue distribution, expressed in splenic and thymic regulatory T-cells (at protein level). Expressed in embryonic molar and incisor teeth.

It is found in the nucleus. Transcription factor that binds to DNA at the consensus sequence 5'-ACCAAAG-3'. Acts as a transcriptional activator. Binds cooperatively with POU3F2/BRN2 or POU3F1/OCT6 to gene promoters, which enhances transcriptional activation. Involved in the differentiation of naive CD4-positive T-cells into peripherally induced regulatory T (pT reg) cells under inflammatory conditions. Binds to the promoter region of the FOXP3 gene and promotes its transcription, and might thereby contribute to pT reg cell differentiation in the spleen and lymph nodes during inflammation. Plays a redundant role with SOX4 and SOX11 in cell survival of developing tissues such as the neural tube, branchial arches and somites, thereby contributing to organogenesis. This Mus musculus (Mouse) protein is Transcription factor SOX-12 (Sox12).